Here is a 224-residue protein sequence, read N- to C-terminus: Attacin-A (224 aa).

An N-terminal signal peptide occupies residues 1–20 (MQKTSILIVALVALFAITEA). A propeptide spanning residues 21 to 34 (LPSLPTTGPIRVRR) is cleaved from the precursor.

Belongs to the attacin/sarcotoxin-2 family. As to expression, hemolymph (at protein level).

The protein localises to the secreted. Functionally, hemolymph antibacterial protein. This is Attacin-A (AttA) from Drosophila melanogaster (Fruit fly).